The primary structure comprises 929 residues: Protocadherin gamma-B7 (929 aa).

Positions 1–30 (MGGSCAQRRRAGPRQVLFPLLLPLFYPTLC) are cleaved as a signal peptide. Cadherin domains follow at residues 31–133 (EPIR…APQF), 134–242 (QKDE…PPVF), 243–347 (SQDV…SPEI), 348–452 (IITS…APVF), 453–562 (GQSA…APRV), and 570–675 (DGSA…LPDF). Residues 31–691 (EPIRYSIPEE…SDSQAEMQFY (661 aa)) are Extracellular-facing. Asn-419 and Asn-545 each carry an N-linked (GlcNAc...) asparagine glycan. Residues 692-712 (LVVALALISVLFLLAVILAIA) form a helical membrane-spanning segment. Residues 713–929 (LRLRQSFSPT…KKKSGKKEKK (217 aa)) are Cytoplasmic-facing. Disordered stretches follow at residues 806–838 (QAPP…WPNN) and 899–929 (ATLT…KEKK). A compositionally biased stretch (polar residues) spans 807–838 (APPNTDWRFSQAQRPGTSGSQNGDDTGTWPNN). Residues 919-929 (NKKKSGKKEKK) are compositionally biased toward basic residues.

It is found in the cell membrane. Its function is as follows. Potential calcium-dependent cell-adhesion protein. May be involved in the establishment and maintenance of specific neuronal connections in the brain. The sequence is that of Protocadherin gamma-B7 (PCDHGB7) from Pan troglodytes (Chimpanzee).